The chain runs to 426 residues: Spermatogenesis-associated protein 2-like protein (426 aa).

4 disordered regions span residues 204–223 (AQDEEPPPLPPRGTPATYGA), 234–256 (DESSEASLYGEPSPGLDSPPVEL), 269–300 (LWGSGGQPWEPPADDMHRASSPPYGALEEELE), and 316–347 (SRSGDLAPPESPSSPGQASPRHRQAEAAASSA). Phosphoserine is present on residues serine 318 and serine 326.

This sequence belongs to the SPATA2 family.

The protein is Spermatogenesis-associated protein 2-like protein of Mus musculus (Mouse).